The primary structure comprises 328 residues: Phosphate acyltransferase (328 aa).

This sequence belongs to the PlsX family. In terms of assembly, homodimer. Probably interacts with PlsY.

It is found in the cytoplasm. The catalysed reaction is a fatty acyl-[ACP] + phosphate = an acyl phosphate + holo-[ACP]. Its pathway is lipid metabolism; phospholipid metabolism. In terms of biological role, catalyzes the reversible formation of acyl-phosphate (acyl-PO(4)) from acyl-[acyl-carrier-protein] (acyl-ACP). This enzyme utilizes acyl-ACP as fatty acyl donor, but not acyl-CoA. The polypeptide is Phosphate acyltransferase (Campylobacter jejuni subsp. jejuni serotype O:6 (strain 81116 / NCTC 11828)).